Here is a 97-residue protein sequence, read N- to C-terminus: Large ribosomal subunit protein bL28 (97 aa).

This sequence belongs to the bacterial ribosomal protein bL28 family.

In Rickettsia akari (strain Hartford), this protein is Large ribosomal subunit protein bL28.